Reading from the N-terminus, the 141-residue chain is Nuclear receptor 2C2-associated protein (141 aa).

This sequence belongs to the NR2C2AP family.

The protein resides in the nucleus. In terms of biological role, may act as a repressor of nr2c2-mediated transactivation by suppressing the binding between nr2c2 and its response element in target genes. This chain is Nuclear receptor 2C2-associated protein (nr2c2ap), found in Danio rerio (Zebrafish).